A 135-amino-acid polypeptide reads, in one-letter code: UPF0299 membrane protein ECA2828 (135 aa).

Transmembrane regions (helical) follow at residues 5–25 (FIVCWQYLRAFALIYLCLLAG), 30–50 (ALLPFTIPGSIIGMLVLFTLL), 63–83 (GCYLLIRHMALLFVPIGVGVM), and 93–113 (FGPIVVSCLISTFIVMLVVGF).

It belongs to the UPF0299 family.

Its subcellular location is the cell inner membrane. The polypeptide is UPF0299 membrane protein ECA2828 (Pectobacterium atrosepticum (strain SCRI 1043 / ATCC BAA-672) (Erwinia carotovora subsp. atroseptica)).